We begin with the raw amino-acid sequence, 141 residues long: Mitochondrial import inner membrane translocase subunit tim16 (141 aa).

A J-like region spans residues 59–117 (EACKILNVNKPADGTAANMEEVMERFKRLFDANDPEKGGSFYLQSKVVRARERLEAEIK). Residues 119–141 (KMEEKQAEEEVKEGWNPKIYKDR) are disordered.

The protein belongs to the TIM16/PAM16 family. In terms of assembly, heterodimer with tim14/pam18. Component of the PAM complex, at least composed of hsp70-5/ssc1, grpe/mge1, tim44, un-4/pam16, pam17 and tim14/pam18.

It localises to the mitochondrion inner membrane. Essential component of the PAM complex, a complex required for the translocation of transit peptide-containing proteins from the inner membrane into the mitochondrial matrix in an ATP-dependent manner. In the complex, it is required to regulate activity of mtHSP70 (hsp70-5) via its interaction with tim14/pam18. May act by positioning tim14/pam18 in juxtaposition to mtHSP70 at the translocon to maximize ATPase stimulation. This Neurospora crassa (strain ATCC 24698 / 74-OR23-1A / CBS 708.71 / DSM 1257 / FGSC 987) protein is Mitochondrial import inner membrane translocase subunit tim16 (un-4).